The sequence spans 227 residues: 2,3-bisphosphoglycerate-dependent phosphoglycerate mutase (227 aa).

Substrate is bound by residues 7–14, 20–21, Arg59, 86–89, Lys97, 113–114, and 182–183; these read RHGFSEWN, TG, ERHY, RR, and GN. Catalysis depends on His8, which acts as the Tele-phosphohistidine intermediate. Glu86 acts as the Proton donor/acceptor in catalysis.

Belongs to the phosphoglycerate mutase family. BPG-dependent PGAM subfamily. As to quaternary structure, homodimer.

The enzyme catalyses (2R)-2-phosphoglycerate = (2R)-3-phosphoglycerate. The protein operates within carbohydrate degradation; glycolysis; pyruvate from D-glyceraldehyde 3-phosphate: step 3/5. In terms of biological role, catalyzes the interconversion of 2-phosphoglycerate and 3-phosphoglycerate. The chain is 2,3-bisphosphoglycerate-dependent phosphoglycerate mutase from Haemophilus influenzae (strain ATCC 51907 / DSM 11121 / KW20 / Rd).